Consider the following 415-residue polypeptide: 3-isopropylmalate dehydratase large subunit (415 aa).

Cys-297, Cys-355, and Cys-358 together coordinate [4Fe-4S] cluster.

The protein belongs to the aconitase/IPM isomerase family. LeuC type 2 subfamily. Heterodimer of LeuC and LeuD. It depends on [4Fe-4S] cluster as a cofactor.

It carries out the reaction (2R,3S)-3-isopropylmalate = (2S)-2-isopropylmalate. It functions in the pathway amino-acid biosynthesis; L-leucine biosynthesis; L-leucine from 3-methyl-2-oxobutanoate: step 2/4. Catalyzes the isomerization between 2-isopropylmalate and 3-isopropylmalate, via the formation of 2-isopropylmaleate. This chain is 3-isopropylmalate dehydratase large subunit, found in Metallosphaera sedula (strain ATCC 51363 / DSM 5348 / JCM 9185 / NBRC 15509 / TH2).